The sequence spans 158 residues: NAD(P)H-quinone oxidoreductase subunit J, chloroplastic (158 aa).

Belongs to the complex I 30 kDa subunit family. As to quaternary structure, NDH is composed of at least 16 different subunits, 5 of which are encoded in the nucleus.

It localises to the plastid. Its subcellular location is the chloroplast thylakoid membrane. The catalysed reaction is a plastoquinone + NADH + (n+1) H(+)(in) = a plastoquinol + NAD(+) + n H(+)(out). It catalyses the reaction a plastoquinone + NADPH + (n+1) H(+)(in) = a plastoquinol + NADP(+) + n H(+)(out). Functionally, NDH shuttles electrons from NAD(P)H:plastoquinone, via FMN and iron-sulfur (Fe-S) centers, to quinones in the photosynthetic chain and possibly in a chloroplast respiratory chain. The immediate electron acceptor for the enzyme in this species is believed to be plastoquinone. Couples the redox reaction to proton translocation, and thus conserves the redox energy in a proton gradient. The sequence is that of NAD(P)H-quinone oxidoreductase subunit J, chloroplastic from Coffea arabica (Arabian coffee).